The sequence spans 335 residues: Ig gamma-2A chain C region secreted form (335 aa).

3 Ig-like domains span residues 6-98, 126-225, and 234-330; these read PSVY…KKIE, PSVF…KTIS, and PQVY…KTIS. Residue Asn185 is glycosylated (N-linked (GlcNAc...) asparagine).

It is found in the secreted. The sequence is that of Ig gamma-2A chain C region secreted form from Mus musculus (Mouse).